Here is a 493-residue protein sequence, read N- to C-terminus: MKNKKEIYYRKKKLEEMRKNENIFPNNFRQNTTIKNIKKNYKKNDKEYFKNNKIIISIAGRIISIRVMGKSSFLEIRNIESKIQIYISENNISKNKYKKIIKQLDIGDIIGVLGVLFKTNTEELSVKCKKLYVLTKSVKPFPNKFQGLLNQEICYRKRYLDLITNKKSRNTFKTRSIIINNIRKFMIKENFVEVETPMMHNIPGGGLSKPFITHHSSLNIDLYLRIAPELYLKQLIVGGFEKIFEINRNFRNEGLSSNHNPEFTMMEFYVAYIDYEDLMKIVENLLNYIVDKIFNKNKINYNNFMINFEKPFKKISMQDSICEYCKNVTQSDISDIKIITDIAKSFNITVEKNWGVGKLQEKIFSEKVEKNLIQPTFVIDYPTEISPLARAKKNNKLITDRFELFVCGNEIGNGFSELNDPKEQKNRFLEQLKNKTLEEQNIFYDKDYITSLEYGLPPTAGCGIGIDRLVMILTNNYSIKDVILFPTLRNANK.

Mg(2+) contacts are provided by glutamate 403 and glutamate 410.

Belongs to the class-II aminoacyl-tRNA synthetase family. In terms of assembly, homodimer. Mg(2+) serves as cofactor.

It localises to the cytoplasm. It carries out the reaction tRNA(Lys) + L-lysine + ATP = L-lysyl-tRNA(Lys) + AMP + diphosphate. This is Lysine--tRNA ligase from Wigglesworthia glossinidia brevipalpis.